The primary structure comprises 249 residues: Syntaxin-10 (249 aa).

The residue at position 2 (Ser-2) is an N-acetylserine. At 2 to 228 the chain is on the cytoplasmic side; sequence SLEDPFFVVR…VSHMTSDRRQ (227 aa). Residues 41–69 are a coiled coil; sequence EELDWTTNELRNGLRSIEWDLEDLEETIG. The residue at position 108 (Ser-108) is a Phosphoserine. Thr-110 carries the phosphothreonine modification. Phosphoserine is present on residues Ser-134, Ser-140, and Ser-143. One can recognise a t-SNARE coiled-coil homology domain in the interval 157-219; the sequence is QLIMDEQDQQ…DGVLRKLAKV (63 aa). Residues 229-249 traverse the membrane as a helical; Anchor for type IV membrane protein segment; it reads WCAIAVLVGVLLLVLILLFSL.

It belongs to the syntaxin family. Interacts with VPS52. Expressed at high levels in heart, skeletal muscle and pancreas.

Its subcellular location is the golgi apparatus membrane. Functionally, SNARE involved in vesicular transport from the late endosomes to the trans-Golgi network. The chain is Syntaxin-10 (STX10) from Homo sapiens (Human).